A 133-amino-acid chain; its full sequence is Ribonuclease P protein component (133 aa).

Belongs to the RnpA family. In terms of assembly, consists of a catalytic RNA component (M1 or rnpB) and a protein subunit.

It carries out the reaction Endonucleolytic cleavage of RNA, removing 5'-extranucleotides from tRNA precursor.. RNaseP catalyzes the removal of the 5'-leader sequence from pre-tRNA to produce the mature 5'-terminus. It can also cleave other RNA substrates such as 4.5S RNA. The protein component plays an auxiliary but essential role in vivo by binding to the 5'-leader sequence and broadening the substrate specificity of the ribozyme. In Corynebacterium glutamicum (strain R), this protein is Ribonuclease P protein component.